The following is a 416-amino-acid chain: Transcription factor caaR (416 aa).

The segment at residues 13–44 (CDRCYAQKLRCPRPSTNDDASCIRCLRQKVQC) is a DNA-binding region (zn(2)-C6 fungal-type). Disordered regions lie at residues 68 to 90 (ATAGAPPITTTTTTAAPSSSDTA) and 130 to 150 (QPPPLDTTPPPRSLSASGLDN). Over residues 130-141 (QPPPLDTTPPPR) the composition is skewed to pro residues. The next 2 helical transmembrane spans lie at 249 to 269 (VIYHFTIACYSLLLLIYATLL) and 302 to 322 (SAPSLVELRLVLLFHMITYFL).

Its subcellular location is the membrane. It is found in the nucleus. Functionally, transcription factor that positively regulates the expression of the gene cluster that mediates the biosynthesis of the acyltetronic acid derivatives carlosic acid, agglomerin F and carlosic acid methyl ether. The protein is Transcription factor caaR of Aspergillus niger (strain ATCC MYA-4892 / CBS 513.88 / FGSC A1513).